The sequence spans 419 residues: Putative zinc metalloprotease SP_0263 (419 aa).

Zn(2+) is bound at residue H18. E19 is a catalytic residue. A Zn(2+)-binding site is contributed by H22. The next 3 membrane-spanning stretches (helical) occupy residues L169–I191, I345–L367, and E388–W410.

This sequence belongs to the peptidase M50B family. Zn(2+) serves as cofactor.

Its subcellular location is the cell membrane. This Streptococcus pneumoniae serotype 4 (strain ATCC BAA-334 / TIGR4) protein is Putative zinc metalloprotease SP_0263.